Here is a 219-residue protein sequence, read N- to C-terminus: FMSPTYLGIPLIAVALTLPWILFPTPSARWLNNRLITLQGWFINRFTQQLLLPLNLGGHKWAALLTSLMLFLITLNMLGLLPYTFTPTTQLSLNMGLAVPLWLATVIIGMRNQPTAALGHLLPEGTPVPLIPVLIIIETISLFIRPLALGVRLTANLTAGHLLIQLIATAAFVLLPLMPTVAILTSIVLFLLTLLEIAVAMIQAYVFVLLLSLYLQENV.

6 helical membrane-spanning segments follow: residues 4 to 24 (PTYLGIPLIAVALTLPWILFP), 61 to 81 (WAALLTSLMLFLITLNMLGLL), 90 to 110 (QLSLNMGLAVPLWLATVIIGM), 124 to 144 (EGTPVPLIPVLIIIETISLFI), 172 to 192 (FVLLPLMPTVAILTSIVLFLL), and 194 to 214 (LLEIAVAMIQAYVFVLLLSLY).

The protein belongs to the ATPase A chain family. Component of the ATP synthase complex composed at least of ATP5F1A/subunit alpha, ATP5F1B/subunit beta, ATP5MC1/subunit c (homooctomer), MT-ATP6/subunit a, MT-ATP8/subunit 8, ATP5ME/subunit e, ATP5MF/subunit f, ATP5MG/subunit g, ATP5MK/subunit k, ATP5MJ/subunit j, ATP5F1C/subunit gamma, ATP5F1D/subunit delta, ATP5F1E/subunit epsilon, ATP5PF/subunit F6, ATP5PB/subunit b, ATP5PD/subunit d, ATP5PO/subunit OSCP. ATP synthase complex consists of a soluble F(1) head domain (subunits alpha(3) and beta(3)) - the catalytic core - and a membrane F(0) domain - the membrane proton channel (subunits c, a, 8, e, f, g, k and j). These two domains are linked by a central stalk (subunits gamma, delta, and epsilon) rotating inside the F1 region and a stationary peripheral stalk (subunits F6, b, d, and OSCP). Interacts with DNAJC30; interaction is direct.

It is found in the mitochondrion inner membrane. The enzyme catalyses H(+)(in) = H(+)(out). In terms of biological role, subunit a, of the mitochondrial membrane ATP synthase complex (F(1)F(0) ATP synthase or Complex V) that produces ATP from ADP in the presence of a proton gradient across the membrane which is generated by electron transport complexes of the respiratory chain. ATP synthase complex consist of a soluble F(1) head domain - the catalytic core - and a membrane F(1) domain - the membrane proton channel. These two domains are linked by a central stalk rotating inside the F(1) region and a stationary peripheral stalk. During catalysis, ATP synthesis in the catalytic domain of F(1) is coupled via a rotary mechanism of the central stalk subunits to proton translocation. With the subunit c (ATP5MC1), forms the proton-conducting channel in the F(0) domain, that contains two crucial half-channels (inlet and outlet) that facilitate proton movement from the mitochondrial intermembrane space (IMS) into the matrix. Protons are taken up via the inlet half-channel and released through the outlet half-channel, following a Grotthuss mechanism. The sequence is that of ATP synthase F(0) complex subunit a from Oncorhynchus masou (Cherry salmon).